Consider the following 371-residue polypeptide: 4-hydroxy-3-methylbut-2-en-1-yl diphosphate synthase (flavodoxin) (371 aa).

4 residues coordinate [4Fe-4S] cluster: Cys-270, Cys-273, Cys-305, and Glu-312.

This sequence belongs to the IspG family. The cofactor is [4Fe-4S] cluster.

The catalysed reaction is (2E)-4-hydroxy-3-methylbut-2-enyl diphosphate + oxidized [flavodoxin] + H2O + 2 H(+) = 2-C-methyl-D-erythritol 2,4-cyclic diphosphate + reduced [flavodoxin]. The protein operates within isoprenoid biosynthesis; isopentenyl diphosphate biosynthesis via DXP pathway; isopentenyl diphosphate from 1-deoxy-D-xylulose 5-phosphate: step 5/6. Functionally, converts 2C-methyl-D-erythritol 2,4-cyclodiphosphate (ME-2,4cPP) into 1-hydroxy-2-methyl-2-(E)-butenyl 4-diphosphate. This is 4-hydroxy-3-methylbut-2-en-1-yl diphosphate synthase (flavodoxin) from Shewanella loihica (strain ATCC BAA-1088 / PV-4).